A 153-amino-acid polypeptide reads, in one-letter code: Large ribosomal subunit protein uL22 (153 aa).

It belongs to the universal ribosomal protein uL22 family. As to quaternary structure, part of the 50S ribosomal subunit.

This protein binds specifically to 23S rRNA. It makes multiple contacts with different domains of the 23S rRNA in the assembled 50S subunit and ribosome. Functionally, the globular domain of the protein is located near the polypeptide exit tunnel on the outside of the subunit, while an extended beta-hairpin is found that lines the wall of the exit tunnel in the center of the 70S ribosome. The protein is Large ribosomal subunit protein uL22 of Methanococcus maripaludis (strain DSM 14266 / JCM 13030 / NBRC 101832 / S2 / LL).